The following is a 715-amino-acid chain: Phosphoribosylformylglycinamidine synthase subunit PurL (715 aa).

His-33 is an active-site residue. Position 36 (Tyr-36) interacts with ATP. Mg(2+) is bound at residue Glu-77. Substrate contacts are provided by residues 78-81 (SHNH) and Arg-100. Residue His-79 is the Proton acceptor of the active site. A Mg(2+)-binding site is contributed by Asp-101. Gln-225 is a binding site for substrate. Asp-253 is a binding site for Mg(2+). 297-299 (ESQ) contacts substrate. Positions 475 and 512 each coordinate ATP. Asn-513 is a binding site for Mg(2+). Ser-515 serves as a coordination point for substrate.

This sequence belongs to the FGAMS family. As to quaternary structure, monomer. Part of the FGAM synthase complex composed of 1 PurL, 1 PurQ and 2 PurS subunits.

It localises to the cytoplasm. It catalyses the reaction N(2)-formyl-N(1)-(5-phospho-beta-D-ribosyl)glycinamide + L-glutamine + ATP + H2O = 2-formamido-N(1)-(5-O-phospho-beta-D-ribosyl)acetamidine + L-glutamate + ADP + phosphate + H(+). It functions in the pathway purine metabolism; IMP biosynthesis via de novo pathway; 5-amino-1-(5-phospho-D-ribosyl)imidazole from N(2)-formyl-N(1)-(5-phospho-D-ribosyl)glycinamide: step 1/2. Its function is as follows. Part of the phosphoribosylformylglycinamidine synthase complex involved in the purines biosynthetic pathway. Catalyzes the ATP-dependent conversion of formylglycinamide ribonucleotide (FGAR) and glutamine to yield formylglycinamidine ribonucleotide (FGAM) and glutamate. The FGAM synthase complex is composed of three subunits. PurQ produces an ammonia molecule by converting glutamine to glutamate. PurL transfers the ammonia molecule to FGAR to form FGAM in an ATP-dependent manner. PurS interacts with PurQ and PurL and is thought to assist in the transfer of the ammonia molecule from PurQ to PurL. This Methanosarcina acetivorans (strain ATCC 35395 / DSM 2834 / JCM 12185 / C2A) protein is Phosphoribosylformylglycinamidine synthase subunit PurL.